A 298-amino-acid chain; its full sequence is Trimeric intracellular cation channel type A (298 aa).

Residues 1 to 18 lie on the Lumenal side of the membrane; that stretch reads MDLMSALSLGELALSFSR. Residues 19–39 form a helical membrane-spanning segment; sequence VPLFPVFDLSYFIVSIIYLKY. The Cytoplasmic portion of the chain corresponds to 40 to 51; it reads EPGAVELSRRHP. Residues 52-72 form a helical membrane-spanning segment; sequence VASWLCAMLHCFGSYILADLL. Residues 73–85 lie on the Lumenal side of the membrane; it reads LGEPIIDYFSNSS. A Ca(2+)-binding site is contributed by glycine 74. The chain crosses the membrane as a helical span at residues 86–106; sequence SILLASGVWYLIFFCPLDLFY. The Cytoplasmic portion of the chain corresponds to 107 to 144; that stretch reads KCVCFLPVKLIFVAMKEVVRVRKIAVGIHHAHHHYHHG. Positions 122 and 126 each coordinate a 1,2-diacyl-sn-glycero-3-phospho-(1D-myo-inositol-4,5-bisphosphate). Residues 145–165 traverse the membrane as a helical segment; that stretch reads WFIMIATGWVKGSGVALLSNV. Topologically, residues 166–178 are lumenal; that stretch reads EQLLRGVWKPETN. A helical membrane pass occupies residues 179-199; it reads EILHMSFPTKASLYGAILFTL. Residues 200–209 are Cytoplasmic-facing; the sequence is QQTRWLPVSK. Residues 210–230 form a helical membrane-spanning segment; it reads ASLIFVFTMFMVSCKVFLTAT. Topologically, residues 231–234 are lumenal; that stretch reads HSHS. The chain crosses the membrane as a helical span at residues 235 to 255; that stretch reads SPFDILEGYICPVLFGATWGG. Residues 256 to 298 lie on the Cytoplasmic side of the membrane; that stretch reads DHHHDNHGAPHGMGLGTQHSGLPAKAKEELGEGSRKKKTKKAD. The interval 260–298 is disordered; that stretch reads DNHGAPHGMGLGTQHSGLPAKAKEELGEGSRKKKTKKAD. Over residues 280 to 289 the composition is skewed to basic and acidic residues; it reads KAKEELGEGS.

Belongs to the TMEM38 family. Homotrimer; conformation seems to be controled by binding to diacylglycerol (DAG). In terms of tissue distribution, expressed at high levels in heart and striated muscle. Also detected in brain, lung and kidney.

Its subcellular location is the sarcoplasmic reticulum membrane. The protein resides in the nucleus membrane. The enzyme catalyses K(+)(in) = K(+)(out). Its activity is regulated as follows. Channel activity is activated by a change of voltage within the sarcoplasmic reticulum lumen and blocked by luminal high Ca(2+) levels. Functionally, intracellular monovalent cation channel required for maintenance of rapid intracellular calcium release. Acts as a potassium counter-ion channel that functions in synchronization with calcium release from intracellular stores. Opened by a change of voltage within the sarcoplasmic reticulum lumen. The polypeptide is Trimeric intracellular cation channel type A (Tmem38a) (Mus musculus (Mouse)).